Reading from the N-terminus, the 149-residue chain is Inner membrane protein YfeZ (149 aa).

Over 1-18 (MKSTEFHPVHYDAHGRLR) the chain is Cytoplasmic. A helical membrane pass occupies residues 19 to 39 (LPLLFWLVLLLQARTWVLFVI). The Periplasmic portion of the chain corresponds to 40-58 (AGASREQGTALLNLFYPDH). Residues 59–79 (DNFWLGLIPGIPAVLAFLLSG) form a helical membrane-spanning segment. Residues 80–89 (RRATFPRTWR) are Cytoplasmic-facing. The helical transmembrane segment at 90-110 (VLYFLLLLAQVVLLCWQPWLW) threads the bilayer. At 111 to 115 (LNGES) the chain is on the periplasmic side. Residues 116–136 (VSGIGLALVVADIVALIWLLT) form a helical membrane-spanning segment. Over 137–149 (NRRLRACFYEVKE) the chain is Cytoplasmic.

It is found in the cell inner membrane. The polypeptide is Inner membrane protein YfeZ (yfeZ) (Escherichia coli (strain K12)).